We begin with the raw amino-acid sequence, 149 residues long: Ribosomal RNA large subunit methyltransferase H (149 aa).

Residues leucine 71, glycine 98, and 117–122 each bind S-adenosyl-L-methionine; that span reads LSKLTL.

This sequence belongs to the RNA methyltransferase RlmH family. As to quaternary structure, homodimer.

It localises to the cytoplasm. The enzyme catalyses pseudouridine(1915) in 23S rRNA + S-adenosyl-L-methionine = N(3)-methylpseudouridine(1915) in 23S rRNA + S-adenosyl-L-homocysteine + H(+). Functionally, specifically methylates the pseudouridine at position 1915 (m3Psi1915) in 23S rRNA. This Campylobacter jejuni subsp. jejuni serotype O:6 (strain 81116 / NCTC 11828) protein is Ribosomal RNA large subunit methyltransferase H.